A 509-amino-acid chain; its full sequence is Cysteine--tRNA ligase (509 aa).

Residue Cys19 participates in Zn(2+) binding. A 'HIGH' region motif is present at residues Pro21–His31. Positions 213, 238, and 242 each coordinate Zn(2+). Positions Lys284–Ser288 match the 'KMSKS' region motif. Lys287 contacts ATP.

This sequence belongs to the class-I aminoacyl-tRNA synthetase family. The cofactor is Zn(2+).

The enzyme catalyses tRNA(Cys) + L-cysteine + ATP = L-cysteinyl-tRNA(Cys) + AMP + diphosphate. The chain is Cysteine--tRNA ligase (CARS) from Acanthamoeba polyphaga (Amoeba).